We begin with the raw amino-acid sequence, 171 residues long: Protein GrpE (171 aa).

A disordered region spans residues 1–22 (MNHEQPDIESQQSAADAAATAG).

Belongs to the GrpE family. In terms of assembly, homodimer.

It is found in the cytoplasm. In terms of biological role, participates actively in the response to hyperosmotic and heat shock by preventing the aggregation of stress-denatured proteins, in association with DnaK and GrpE. It is the nucleotide exchange factor for DnaK and may function as a thermosensor. Unfolded proteins bind initially to DnaJ; upon interaction with the DnaJ-bound protein, DnaK hydrolyzes its bound ATP, resulting in the formation of a stable complex. GrpE releases ADP from DnaK; ATP binding to DnaK triggers the release of the substrate protein, thus completing the reaction cycle. Several rounds of ATP-dependent interactions between DnaJ, DnaK and GrpE are required for fully efficient folding. The sequence is that of Protein GrpE from Stenotrophomonas maltophilia (strain K279a).